Consider the following 203-residue polypeptide: Endo-type membrane-bound lytic murein transglycosylase A (203 aa).

A signal peptide spans 1–15 (MKLRWFAFLIVLLAG). Cysteine 16 carries the N-palmitoyl cysteine lipid modification. Residue cysteine 16 is the site of S-diacylglycerol cysteine attachment.

It belongs to the transglycosylase Slt family.

It localises to the cell outer membrane. The catalysed reaction is Endolytic cleavage of the (1-&gt;4)-beta-glycosidic linkage between N-acetylmuramic acid (MurNAc) and N-acetylglucosamine (GlcNAc) residues in peptidoglycan with concomitant formation of a 1,6-anhydrobond in the MurNAc residue.. Functionally, murein-degrading enzyme. May play a role in recycling of muropeptides during cell elongation and/or cell division. Preferentially cleaves at a distance of more than two disaccharide units from the ends of the glycan chain. This is Endo-type membrane-bound lytic murein transglycosylase A from Escherichia coli (strain K12 / MC4100 / BW2952).